The following is a 165-amino-acid chain: Deoxyuridine 5'-triphosphate nucleotidohydrolase (165 aa).

This sequence belongs to the dUTPase family. In terms of assembly, homotrimer. It depends on Mg(2+) as a cofactor.

The protein localises to the host cytoplasm. The protein resides in the virion. It carries out the reaction dUTP + H2O = dUMP + diphosphate + H(+). The viral dUTPase may play a role in lowering the dUTP concentration in natural infections to minimize misincorporation of deoxyuridine into the viral DNA and ensure the fidelity of genome replication. The chain is Deoxyuridine 5'-triphosphate nucleotidohydrolase from Ornithodoros (relapsing fever ticks).